Here is a 155-residue protein sequence, read N- to C-terminus: 3-hydroxyacyl-[acyl-carrier-protein] dehydratase FabZ (155 aa).

His58 is an active-site residue.

This sequence belongs to the thioester dehydratase family. FabZ subfamily.

Its subcellular location is the cytoplasm. The enzyme catalyses a (3R)-hydroxyacyl-[ACP] = a (2E)-enoyl-[ACP] + H2O. Functionally, involved in unsaturated fatty acids biosynthesis. Catalyzes the dehydration of short chain beta-hydroxyacyl-ACPs and long chain saturated and unsaturated beta-hydroxyacyl-ACPs. This chain is 3-hydroxyacyl-[acyl-carrier-protein] dehydratase FabZ, found in Rhizobium leguminosarum bv. trifolii (strain WSM2304).